The following is a 943-amino-acid chain: AP-1 complex subunit beta-1 (943 aa).

Residue lysine 318 is modified to N6-acetyllysine. The residue at position 574 (tyrosine 574) is a 3'-nitrotyrosine. The tract at residues 584 to 621 (GGRGVVHKSLPPRTASSESTESPETAPAGAPAGDQPDV) is disordered. The span at 594 to 616 (PPRTASSESTESPETAPAGAPAG) shows a compositional bias: low complexity.

This sequence belongs to the adaptor complexes large subunit family. In terms of assembly, adaptor protein complex 1 (AP-1) is a heterotetramer composed of two large adaptins (gamma-type subunit AP1G1 and beta-type subunit AP1B1), a medium adaptin (mu-type subunit AP1M1 or AP1M2) and a small adaptin (sigma-type subunit AP1S1 or AP1S2 or AP1S3). In terms of tissue distribution, widely expressed.

Its subcellular location is the cytoplasmic vesicle. The protein resides in the clathrin-coated vesicle membrane. It is found in the golgi apparatus. Subunit of clathrin-associated adaptor protein complex 1 that plays a role in protein sorting in the late-Golgi/trans-Golgi network (TGN) and/or endosomes. The AP complexes mediate both the recruitment of clathrin to membranes and the recognition of sorting signals within the cytosolic tails of transmembrane cargo molecules. The polypeptide is AP-1 complex subunit beta-1 (Ap1b1) (Mus musculus (Mouse)).